A 350-amino-acid chain; its full sequence is Dihydroorotase (350 aa).

2 residues coordinate Zn(2+): H17 and H19. Residues H19–R21 and N45 contribute to the substrate site. Zn(2+) contacts are provided by K103, H140, and H178. K103 is subject to N6-carboxylysine. A substrate-binding site is contributed by H140. L223 serves as a coordination point for substrate. Residue D251 coordinates Zn(2+). The active site involves D251. 2 residues coordinate substrate: H255 and A267.

The protein belongs to the metallo-dependent hydrolases superfamily. DHOase family. Class II DHOase subfamily. In terms of assembly, homodimer. The cofactor is Zn(2+).

The enzyme catalyses (S)-dihydroorotate + H2O = N-carbamoyl-L-aspartate + H(+). The protein operates within pyrimidine metabolism; UMP biosynthesis via de novo pathway; (S)-dihydroorotate from bicarbonate: step 3/3. In terms of biological role, catalyzes the reversible cyclization of carbamoyl aspartate to dihydroorotate. The protein is Dihydroorotase of Photorhabdus laumondii subsp. laumondii (strain DSM 15139 / CIP 105565 / TT01) (Photorhabdus luminescens subsp. laumondii).